A 372-amino-acid chain; its full sequence is Dual-specificity RNA methyltransferase RlmN (372 aa).

Glu-94 (proton acceptor) is an active-site residue. One can recognise a Radical SAM core domain in the interval 100 to 339 (DGDRATLCVS…VTIRKTRGDD (240 aa)). The cysteines at positions 107 and 344 are disulfide-linked. Positions 114, 118, and 121 each coordinate [4Fe-4S] cluster. Residues 168–169 (GE), Ser-200, 222–224 (SLH), and Asn-301 each bind S-adenosyl-L-methionine. Catalysis depends on Cys-344, which acts as the S-methylcysteine intermediate.

This sequence belongs to the radical SAM superfamily. RlmN family. [4Fe-4S] cluster is required as a cofactor.

Its subcellular location is the cytoplasm. The catalysed reaction is adenosine(2503) in 23S rRNA + 2 reduced [2Fe-2S]-[ferredoxin] + 2 S-adenosyl-L-methionine = 2-methyladenosine(2503) in 23S rRNA + 5'-deoxyadenosine + L-methionine + 2 oxidized [2Fe-2S]-[ferredoxin] + S-adenosyl-L-homocysteine. It catalyses the reaction adenosine(37) in tRNA + 2 reduced [2Fe-2S]-[ferredoxin] + 2 S-adenosyl-L-methionine = 2-methyladenosine(37) in tRNA + 5'-deoxyadenosine + L-methionine + 2 oxidized [2Fe-2S]-[ferredoxin] + S-adenosyl-L-homocysteine. Functionally, specifically methylates position 2 of adenine 2503 in 23S rRNA and position 2 of adenine 37 in tRNAs. m2A2503 modification seems to play a crucial role in the proofreading step occurring at the peptidyl transferase center and thus would serve to optimize ribosomal fidelity. In Aliivibrio fischeri (strain MJ11) (Vibrio fischeri), this protein is Dual-specificity RNA methyltransferase RlmN.